Reading from the N-terminus, the 325-residue chain is Glutarate 2-hydroxylase (325 aa).

Fe cation is bound by residues His160, Asp162, and His292.

The protein belongs to the glutarate hydroxylase family. As to quaternary structure, homotetramer. Fe(2+) is required as a cofactor.

The enzyme catalyses glutarate + 2-oxoglutarate + O2 = (S)-2-hydroxyglutarate + succinate + CO2. Its pathway is amino-acid degradation. Its function is as follows. Acts as an alpha-ketoglutarate-dependent dioxygenase catalyzing hydroxylation of glutarate (GA) to L-2-hydroxyglutarate (L2HG). Functions in a L-lysine degradation pathway that proceeds via cadaverine, glutarate and L-2-hydroxyglutarate. In Klebsiella pneumoniae (strain 342), this protein is Glutarate 2-hydroxylase.